Consider the following 391-residue polypeptide: uncharacterized protein (391 aa).

This sequence belongs to the mimivirus L17x/L18x family.

This is an uncharacterized protein from Acanthamoeba polyphaga (Amoeba).